Reading from the N-terminus, the 119-residue chain is Integration host factor subunit beta (119 aa).

The disordered stretch occupies residues 93 to 119; it reads AGGLADTQPDGDAPDQPQPTLLGLHAM. Residues 97–112 are compositionally biased toward low complexity; the sequence is ADTQPDGDAPDQPQPT.

The protein belongs to the bacterial histone-like protein family. Heterodimer of an alpha and a beta chain.

This protein is one of the two subunits of integration host factor, a specific DNA-binding protein that functions in genetic recombination as well as in transcriptional and translational control. The chain is Integration host factor subunit beta from Bordetella petrii (strain ATCC BAA-461 / DSM 12804 / CCUG 43448).